The following is a 734-amino-acid chain: Photosystem I P700 chlorophyll a apoprotein A2 (734 aa).

The next 8 membrane-spanning stretches (helical) occupy residues 46 to 69 (IFAS…FHVA), 135 to 158 (LYTG…LHLQ), 175 to 199 (LNHH…HVAI), 273 to 291 (MAHH…GHMY), 330 to 353 (IHFQ…QHMY), 369 to 395 (AALY…IFFI), 417 to 439 (AIIS…LYVH), and 517 to 535 (FLVH…LILV). Residues C559 and C568 each contribute to the [4Fe-4S] cluster site. Helical transmembrane passes span 575–596 (AFYL…YWHW) and 643–665 (LSVW…MFLI). Chlorophyll a-binding residues include H654, M662, and Y670. W671 is a binding site for phylloquinone. Residues 707 to 727 (LVGLAHFSVGYIFTYAAFLIA) traverse the membrane as a helical segment.

Belongs to the PsaA/PsaB family. In terms of assembly, the PsaA/B heterodimer binds the P700 chlorophyll special pair and subsequent electron acceptors. PSI consists of a core antenna complex that captures photons, and an electron transfer chain that converts photonic excitation into a charge separation. The eukaryotic PSI reaction center is composed of at least 11 subunits. P700 is a chlorophyll a/chlorophyll a' dimer, A0 is one or more chlorophyll a, A1 is one or both phylloquinones and FX is a shared 4Fe-4S iron-sulfur center. is required as a cofactor.

It localises to the plastid. The protein resides in the chloroplast thylakoid membrane. The catalysed reaction is reduced [plastocyanin] + hnu + oxidized [2Fe-2S]-[ferredoxin] = oxidized [plastocyanin] + reduced [2Fe-2S]-[ferredoxin]. PsaA and PsaB bind P700, the primary electron donor of photosystem I (PSI), as well as the electron acceptors A0, A1 and FX. PSI is a plastocyanin-ferredoxin oxidoreductase, converting photonic excitation into a charge separation, which transfers an electron from the donor P700 chlorophyll pair to the spectroscopically characterized acceptors A0, A1, FX, FA and FB in turn. Oxidized P700 is reduced on the lumenal side of the thylakoid membrane by plastocyanin. The chain is Photosystem I P700 chlorophyll a apoprotein A2 from Crucihimalaya wallichii (Rock-cress).